A 73-amino-acid polypeptide reads, in one-letter code: Translation initiation factor IF-1 (73 aa).

The region spanning 1 to 73 (MSEKEAGIEV…TRGRITYRDK (73 aa)) is the S1-like domain.

Belongs to the IF-1 family. As to quaternary structure, component of the 30S ribosomal translation pre-initiation complex which assembles on the 30S ribosome in the order IF-2 and IF-3, IF-1 and N-formylmethionyl-tRNA(fMet); mRNA recruitment can occur at any time during PIC assembly.

It is found in the cytoplasm. Functionally, one of the essential components for the initiation of protein synthesis. Stabilizes the binding of IF-2 and IF-3 on the 30S subunit to which N-formylmethionyl-tRNA(fMet) subsequently binds. Helps modulate mRNA selection, yielding the 30S pre-initiation complex (PIC). Upon addition of the 50S ribosomal subunit IF-1, IF-2 and IF-3 are released leaving the mature 70S translation initiation complex. The polypeptide is Translation initiation factor IF-1 (Anaeromyxobacter sp. (strain Fw109-5)).